Consider the following 443-residue polypeptide: Tubulin beta-3 chain (443 aa).

The GTP site is built by Gln-11, Glu-69, Ser-138, Gly-142, Thr-143, Gly-144, Asn-204, and Asn-226. Mg(2+) is bound at residue Glu-69.

It belongs to the tubulin family. In terms of assembly, dimer of alpha and beta chains. A typical microtubule is a hollow water-filled tube with an outer diameter of 25 nm and an inner diameter of 15 nM. Alpha-beta heterodimers associate head-to-tail to form protofilaments running lengthwise along the microtubule wall with the beta-tubulin subunit facing the microtubule plus end conferring a structural polarity. Microtubules usually have 13 protofilaments but different protofilament numbers can be found in some organisms and specialized cells. The cofactor is Mg(2+).

It is found in the cytoplasm. The protein localises to the cytoskeleton. Functionally, tubulin is the major constituent of microtubules, a cylinder consisting of laterally associated linear protofilaments composed of alpha- and beta-tubulin heterodimers. Microtubules grow by the addition of GTP-tubulin dimers to the microtubule end, where a stabilizing cap forms. Below the cap, tubulin dimers are in GDP-bound state, owing to GTPase activity of alpha-tubulin. The polypeptide is Tubulin beta-3 chain (TUB-3) (Echinococcus multilocularis (Fox tapeworm)).